A 150-amino-acid polypeptide reads, in one-letter code: UPF0540 protein At1g62080 (150 aa).

A signal peptide spans 1–21 (MNATKFLVLLVIGVLCAIVTA). A compositionally biased stretch (low complexity) spans 119–135 (AAAARAKGKVASASRVK). Residues 119 to 150 (AAAARAKGKVASASRVKGSSEKKKKDRKGKKD) form a disordered region.

This sequence belongs to the UPF0540 family.

This is UPF0540 protein At1g62080 from Arabidopsis thaliana (Mouse-ear cress).